We begin with the raw amino-acid sequence, 469 residues long: Cysteine--tRNA ligase (469 aa).

Cys-28 contributes to the Zn(2+) binding site. The 'HIGH' region signature appears at Pro-30 to Asn-40. 3 residues coordinate Zn(2+): Cys-213, His-238, and Glu-242. The 'KMSKS' region signature appears at Lys-270–Ser-274. Lys-273 contributes to the ATP binding site.

Belongs to the class-I aminoacyl-tRNA synthetase family. As to quaternary structure, monomer. Requires Zn(2+) as cofactor.

The protein resides in the cytoplasm. The enzyme catalyses tRNA(Cys) + L-cysteine + ATP = L-cysteinyl-tRNA(Cys) + AMP + diphosphate. This Leuconostoc citreum (strain KM20) protein is Cysteine--tRNA ligase.